Here is a 477-residue protein sequence, read N- to C-terminus: uncharacterized protein (477 aa).

12 helical membrane passes run leucine 31–threonine 51, leucine 60–phenylalanine 80, leucine 103–leucine 123, methionine 130–glycine 150, leucine 177–leucine 197, leucine 205–tryptophan 225, alanine 248–glycine 268, valine 291–tryptophan 311, isoleucine 334–alanine 354, isoleucine 359–valine 379, glycine 384–isoleucine 404, and valine 433–valine 453.

This sequence belongs to the PucC family.

It is found in the cell membrane. This is an uncharacterized protein from Rhodobacter capsulatus (Rhodopseudomonas capsulata).